Reading from the N-terminus, the 65-residue chain is Large ribosomal subunit protein bL35 (65 aa).

Residues 1–51 (MPKIKTNRGAAKRFRKSASGRVKRGNAFTSHILTHKTRKNKRNLRGTSMVS) form a disordered region. Composition is skewed to basic residues over residues 10–24 (AAKR…RVKR) and 33–44 (LTHKTRKNKRNL).

Belongs to the bacterial ribosomal protein bL35 family.

This is Large ribosomal subunit protein bL35 from Pelobacter propionicus (strain DSM 2379 / NBRC 103807 / OttBd1).